A 425-amino-acid polypeptide reads, in one-letter code: Enolase (425 aa).

(2R)-2-phosphoglycerate is bound at residue Gln-161. The Proton donor role is filled by Glu-203. Mg(2+) is bound by residues Asp-240, Glu-283, and Asp-310. 4 residues coordinate (2R)-2-phosphoglycerate: Lys-335, Arg-364, Ser-365, and Lys-386. Lys-335 (proton acceptor) is an active-site residue.

The protein belongs to the enolase family. As to quaternary structure, component of the RNA degradosome, a multiprotein complex involved in RNA processing and mRNA degradation. The cofactor is Mg(2+).

The protein resides in the cytoplasm. Its subcellular location is the secreted. It localises to the cell surface. It carries out the reaction (2R)-2-phosphoglycerate = phosphoenolpyruvate + H2O. It functions in the pathway carbohydrate degradation; glycolysis; pyruvate from D-glyceraldehyde 3-phosphate: step 4/5. Catalyzes the reversible conversion of 2-phosphoglycerate (2-PG) into phosphoenolpyruvate (PEP). It is essential for the degradation of carbohydrates via glycolysis. This is Enolase from Ruthia magnifica subsp. Calyptogena magnifica.